Reading from the N-terminus, the 511-residue chain is Cytochrome P450 monooxygenase esdpI (511 aa).

The helical transmembrane segment at 14 to 34 (VRAGLAIGVAILAIIVLFPGI) threads the bilayer. C453 lines the heme pocket.

This sequence belongs to the cytochrome P450 family. It depends on heme as a cofactor.

The protein resides in the membrane. Its pathway is secondary metabolite biosynthesis; terpenoid biosynthesis. Functionally, cytochrome P450 monooxygenase; part of the cluster that mediates the biosynthesis of shearones, diterpenoid pyrones (DPs) which are structurally diverse meroterpenoids consisting of a diterpene linked by a pyrone, and which may exhibit a range of bioactivities. Whitin the pathway, esdpI takes part in the molecular scaffold modification via the hydroxylation at C-20 and can transform shearone C into shearone G. The molecular scaffold is commonly biosynthesized by a series of enzymes including the non-reducing polyketide synthase (NR-PKS) esdpA that generates an alpha-pyrone; the prenyltransferase esdpC that attaches a geranylgeranyl pyrophosphate (GGPP) produced by the GGPP synthase (GGPPS) esdpD onto the pyrone unit; the FAD-dependent monooxygenase esdpE that converts an olefin on the diterpene unit into an epoxide; and the terpene cyclase esdpB that catalyzes the cyclization reactions to give the molecular backbone shearone A. In the modification steps, esdpF oxidizes the hydroxy group to a ketone at C-3 and esdpG then attaches hydroxy groups at both C-11 and C-12. After that, esdpI hydroxylates at C-20 and esdpH hydroxylates at C-6'. The ether bridge is generated by nucleophilic attack of the hydroxy group at C-20 to the carbonyl carbon at C-3. EsdpH can also functions prior to esdpI. The different combinations of these modification enzymes lead to the production of diverse shearone derivatives, shearone I being the end product of the pathway. The alpha-ketoglutarate-dependent dioxygenase esdpJ seems not to be involved in this pathway. This Penicillium shearii (Eupenicillium shearii) protein is Cytochrome P450 monooxygenase esdpI.